We begin with the raw amino-acid sequence, 105 residues long: Pyrimidine/purine nucleoside phosphorylase (105 aa).

This sequence belongs to the nucleoside phosphorylase PpnP family.

The catalysed reaction is a purine D-ribonucleoside + phosphate = a purine nucleobase + alpha-D-ribose 1-phosphate. It catalyses the reaction adenosine + phosphate = alpha-D-ribose 1-phosphate + adenine. The enzyme catalyses cytidine + phosphate = cytosine + alpha-D-ribose 1-phosphate. It carries out the reaction guanosine + phosphate = alpha-D-ribose 1-phosphate + guanine. The catalysed reaction is inosine + phosphate = alpha-D-ribose 1-phosphate + hypoxanthine. It catalyses the reaction thymidine + phosphate = 2-deoxy-alpha-D-ribose 1-phosphate + thymine. The enzyme catalyses uridine + phosphate = alpha-D-ribose 1-phosphate + uracil. It carries out the reaction xanthosine + phosphate = alpha-D-ribose 1-phosphate + xanthine. Catalyzes the phosphorolysis of diverse nucleosides, yielding D-ribose 1-phosphate and the respective free bases. Can use uridine, adenosine, guanosine, cytidine, thymidine, inosine and xanthosine as substrates. Also catalyzes the reverse reactions. The chain is Pyrimidine/purine nucleoside phosphorylase from Albidiferax ferrireducens (strain ATCC BAA-621 / DSM 15236 / T118) (Rhodoferax ferrireducens).